Consider the following 401-residue polypeptide: MTERIVLAYSGGLDTSVAIGWIGEATGAEVIAVAVDVGQGGESLETIRQRALGCGAVEAYVADARDEFANEYAMPTLKANALYQGHYPLVSAISRPVIVKHLVKAAREFGATTVAHGCTGKGNDQVRFEVGIQTLGPDLKCIAPVRDLALTRDKAIAFAEEKGLPIETTKKNPYSIDQNVWGRAVETGYLEDIWNAPTKDIYDYTATPEFPPAPDEVTISFQAGVPVAIDGVKVSPLQAIQELNRRAGAQGVGRIDVVEDRLVGIKSREIYEAPGAMALITAHKHLEDITIEREQARFKATVGQRWAELVYDGQWFSPLKRSLDAFIEDTQKYVSGDIRMVLHGGQAIVNGRRSDTSLYDFDLATYDTGDTFDQSMARGFIELWGMSSKVASGRDLRVEGK.

8–16 contributes to the ATP binding site; it reads AYSGGLDTS. Tyr87 is a binding site for L-citrulline. Gly117 contacts ATP. L-aspartate is bound by residues Thr119, Asn123, and Asp124. Asn123 is a binding site for L-citrulline. The L-citrulline site is built by Arg127, Ser175, Glu259, and Tyr271.

This sequence belongs to the argininosuccinate synthase family. Type 1 subfamily. In terms of assembly, homotetramer.

The protein resides in the cytoplasm. The enzyme catalyses L-citrulline + L-aspartate + ATP = 2-(N(omega)-L-arginino)succinate + AMP + diphosphate + H(+). It participates in amino-acid biosynthesis; L-arginine biosynthesis; L-arginine from L-ornithine and carbamoyl phosphate: step 2/3. The protein is Argininosuccinate synthase of Pseudarthrobacter chlorophenolicus (strain ATCC 700700 / DSM 12829 / CIP 107037 / JCM 12360 / KCTC 9906 / NCIMB 13794 / A6) (Arthrobacter chlorophenolicus).